The chain runs to 88 residues: Phage-like element PBSX protein XkdR (88 aa).

The protein to B.subtilis YqbR.

This is Phage-like element PBSX protein XkdR (xkdR) from Bacillus subtilis (strain 168).